We begin with the raw amino-acid sequence, 457 residues long: MDHLPIFCQLRDRDCLIVGGGDVAERKARLLLDAGARLTVNALAFIPQFTAWADAGMLTLVEGPFDESLLDTCWLAIAATDDDALNQRVSEAAESRRIFCNVVDAPKAASFIMPSIIDRSPLMVAVSSGGTSPVLARLLREKLESLLPLHLGQVAKYAGQLRGRVKQQFATMGERRRFWEKLFVNDRLAQSLANNDQKAITETTEQLINEPLDHRGEVVLVGAGPGDAGLLTLKGLQQIQQADVVVYDRLVSDDIMNLVRRDADRVFVGKRAGYHCVPQEEINQILLREAQKGKRVVRLKGGDPFIFGRGGEELETLCNAGIPFSVVPGITAASGCSAYSGIPLTHRDYAQSVRLITGHLKTGGELDWENLAAEKQTLVFYMGLNQAATIQQKLIEYGMPGEMPVAIVENGTAVTQRVIDGTLTQLGELAQQMNSPSLIIIGRVVGLRDKLNWFSNH.

Residues 1–204 are precorrin-2 dehydrogenase /sirohydrochlorin ferrochelatase; it reads MDHLPIFCQL…NDQKAITETT (204 aa). NAD(+)-binding positions include 22-23 and 43-44; these read DV and LA. Ser-128 carries the phosphoserine modification. The uroporphyrinogen-III C-methyltransferase stretch occupies residues 216 to 457; the sequence is GEVVLVGAGP…RDKLNWFSNH (242 aa). Pro-225 serves as a coordination point for S-adenosyl-L-methionine. Asp-248 functions as the Proton acceptor in the catalytic mechanism. Lys-270 acts as the Proton donor in catalysis. S-adenosyl-L-methionine is bound by residues 301–303, Ile-306, 331–332, Met-382, and Gly-411; these read GGD and TA.

This sequence in the N-terminal section; belongs to the precorrin-2 dehydrogenase / sirohydrochlorin ferrochelatase family. It in the C-terminal section; belongs to the precorrin methyltransferase family.

It carries out the reaction uroporphyrinogen III + 2 S-adenosyl-L-methionine = precorrin-2 + 2 S-adenosyl-L-homocysteine + H(+). The catalysed reaction is precorrin-2 + NAD(+) = sirohydrochlorin + NADH + 2 H(+). The enzyme catalyses siroheme + 2 H(+) = sirohydrochlorin + Fe(2+). It functions in the pathway cofactor biosynthesis; adenosylcobalamin biosynthesis; precorrin-2 from uroporphyrinogen III: step 1/1. It participates in cofactor biosynthesis; adenosylcobalamin biosynthesis; sirohydrochlorin from precorrin-2: step 1/1. The protein operates within porphyrin-containing compound metabolism; siroheme biosynthesis; precorrin-2 from uroporphyrinogen III: step 1/1. Its pathway is porphyrin-containing compound metabolism; siroheme biosynthesis; siroheme from sirohydrochlorin: step 1/1. It functions in the pathway porphyrin-containing compound metabolism; siroheme biosynthesis; sirohydrochlorin from precorrin-2: step 1/1. Multifunctional enzyme that catalyzes the SAM-dependent methylations of uroporphyrinogen III at position C-2 and C-7 to form precorrin-2 via precorrin-1. Then it catalyzes the NAD-dependent ring dehydrogenation of precorrin-2 to yield sirohydrochlorin. Finally, it catalyzes the ferrochelation of sirohydrochlorin to yield siroheme. This is Siroheme synthase from Escherichia coli O6:K15:H31 (strain 536 / UPEC).